The following is a 245-amino-acid chain: tRNA pseudouridine synthase A (245 aa).

Residue Asp-52 is the Nucleophile of the active site. Tyr-110 is a binding site for substrate.

This sequence belongs to the tRNA pseudouridine synthase TruA family. In terms of assembly, homodimer.

The enzyme catalyses uridine(38/39/40) in tRNA = pseudouridine(38/39/40) in tRNA. In terms of biological role, formation of pseudouridine at positions 38, 39 and 40 in the anticodon stem and loop of transfer RNAs. The polypeptide is tRNA pseudouridine synthase A (Borrelia turicatae (strain 91E135)).